Consider the following 306-residue polypeptide: Serine/threonine-protein phosphatase 2A catalytic subunit A (306 aa).

Asp54, His56, Asp82, and Asn114 together coordinate Mn(2+). The active-site Proton donor is the His115. Residues His164 and His238 each contribute to the Mn(2+) site. Leu306 is subject to Leucine methyl ester.

It belongs to the PPP phosphatase family. PP-2A subfamily. PP2A consists of a trimeric holoenzyme, composed of a 37 kDa catalytic subunit (C subunit) and a 65 kDa constant regulatory subunit (A subunit), that associates with a variety of regulatory subunits (B subunit) such as phr2AB (B55) and psrA (B56 homolog). The trimer may partially dissociates into a core 'AC' dimer equally active compared to the trimer. The cofactor is Mn(2+). Reversibly methyl esterified on Leu-306 by leucine carboxyl methyltransferase 1 (LCMT) and protein phosphatase methylesterase 1 (PPME1). Carboxyl methylation influences the affinity of the catalytic subunit for the different regulatory subunits, thereby modulating the PP2A holoenzyme's substrate specificity, enzyme activity and cellular localization.

The protein resides in the cytoplasm. It is found in the cytosol. The protein localises to the nucleus speckle. It catalyses the reaction O-phospho-L-seryl-[protein] + H2O = L-seryl-[protein] + phosphate. The enzyme catalyses O-phospho-L-threonyl-[protein] + H2O = L-threonyl-[protein] + phosphate. Its function is as follows. Plays a role in activating the myosin contractile function. Dephosphorylates threonine at 'Thr-1823', 'Thr-1833' and 'Thr-2029' in the C-terminal tail region of myosin II heavy chain (mhcA). Drives the assembly of dephosphorylated myosin II filaments to allow myosin recruitment into the cytoskeleton. This chain is Serine/threonine-protein phosphatase 2A catalytic subunit A (pho2a), found in Dictyostelium discoideum (Social amoeba).